Reading from the N-terminus, the 7031-residue chain is Extracellular matrix-binding protein EbhB (7031 aa).

A signal peptide spans 1 to 39 (MNYRDKIQKFSIRKYTVGTFSTVIATLVFLGFNTSQAHA). Polar residues predominate over residues 41–59 (ETNQPASVVKQKQQSNNEQ). Disordered stretches follow at residues 41–86 (ETNQ…HENE), 99–152 (KVAQ…GNDN), 250–277 (PQRQQTSRRSNRIQTRSVESRAAEPRSV), 1342–1373 (NNITGNEKSQAEAGGRPNFRTTGYSQSNATTD), and 2418–2438 (TITPKAGTGHSVSSNPSTLTA). Positions 65 to 80 (SQVQNSQNSQNGQSLS) are enriched in low complexity. Residues 99–117 (KVAQSSTTNDEQPASQNVN) show a composition bias toward polar residues. Residues 130 to 140 (PDKEQSKHKQN) show a composition bias toward basic and acidic residues. 4 stretches are compositionally biased toward polar residues: residues 141–151 (ESQSANKNGND), 250–266 (PQRQQTSRRSNRIQTRS), 1360–1373 (FRTTGYSQSNATTD), and 2427–2438 (HSVSSNPSTLTA). FIVAR domains follow at residues 2524–2580 (AKNH…VSDA), 2610–2666 (SKNN…ISDE), 2687–2750 (DTHA…VQSA), 2780–2836 (AKTK…IAAE), 2864–2919 (AKTQ…IRQN), 2947–3002 (AKNQ…INTN), 3030–3085 (AKTQ…INDK), 3154–3212 (AMTK…VNQK), 3280–3339 (AMTG…VNNA), 3407–3465 (AMGN…VNRA), 3533–3591 (AMGN…VTEA), 3659–3717 (AMNT…ITQK), 3785–3843 (AMAS…VEAA), 3911–3969 (AMGN…VEQA), 4037–4095 (AMGT…VTAA), 4163–4221 (AMKG…ITQA), 4289–4347 (QMGN…VEAA), 4415–4473 (AMAN…VENA), 4541–4599 (AMGT…INQI), 4667–4725 (AMGQ…VDRA), 4793–4851 (AMNS…VDNA), 4919–4977 (AMGA…INGM), 5045–5103 (AMTA…VNSA), 5171–5229 (AMKG…ITQV), 5297–5355 (AMHS…VEQA), 5423–5481 (AMGQ…VERA), 5549–5607 (AMTA…VTNA), 5675–5733 (AMKG…INQA), 5801–5859 (AMTN…VETA), 5927–5985 (AMSN…VEQA), 6053–6111 (AMNQ…INQK), 6179–6236 (AMGN…VQAA), 6304–6362 (AMGQ…VEAA), 6430–6488 (AMQR…VEQA), 6556–6614 (AMDQ…VTAA), 6682–6740 (AMNQ…VTQA), 6818–6866 (DKDQ…VEAA), and 6934–6992 (AMGN…VEAA).

This chain is Extracellular matrix-binding protein EbhB (ebhB), found in Staphylococcus aureus (strain Newman).